We begin with the raw amino-acid sequence, 456 residues long: UDP-N-acetylglucosamine 1-carboxyvinyltransferase (456 aa).

Residue 34–35 (KN) coordinates phosphoenolpyruvate. Arg104 lines the UDP-N-acetyl-alpha-D-glucosamine pocket. The Proton donor role is filled by Cys128. A 2-(S-cysteinyl)pyruvic acid O-phosphothioketal modification is found at Cys128. UDP-N-acetyl-alpha-D-glucosamine contacts are provided by Asp319 and Ile341.

It belongs to the EPSP synthase family. MurA subfamily.

It localises to the cytoplasm. It carries out the reaction phosphoenolpyruvate + UDP-N-acetyl-alpha-D-glucosamine = UDP-N-acetyl-3-O-(1-carboxyvinyl)-alpha-D-glucosamine + phosphate. It participates in cell wall biogenesis; peptidoglycan biosynthesis. Its function is as follows. Cell wall formation. Adds enolpyruvyl to UDP-N-acetylglucosamine. This Prochlorococcus marinus (strain MIT 9301) protein is UDP-N-acetylglucosamine 1-carboxyvinyltransferase.